We begin with the raw amino-acid sequence, 614 residues long: Sorting nexin-18 (614 aa).

The SH3 domain occupies 1–61 (MALRARALYD…PASYVQVIRA (61 aa)). Positions 85–218 (GFEPLPAAPP…SQELGHGEPQ (134 aa)) are disordered. Over residues 90–101 (PAAPPAAFPPLL) the composition is skewed to pro residues. The span at 141–151 (SDDDWDDEWDD) shows a compositional bias: acidic residues. The PX domain occupies 266–376 (FQCTIDDPTK…HFLTCPSSTD (111 aa)). The a 1,2-diacyl-sn-glycero-3-phospho-(1D-myo-inositol-4,5-bisphosphate) site is built by Arg302, Lys304, and Arg342. One can recognise a BAR domain in the interval 411-614 (LQEVESKIDG…EEALHKYDSV (204 aa)).

The protein belongs to the sorting nexin family. In terms of assembly, heterodimer with SNX9. Interacts with ITCH. Interacts with dynamin-2 (DNM2), SYNJ1 and WASL. Interacts with the AP-1 complex. Interacts with FCHSD1 (via the F-BAR domain).

The protein resides in the endomembrane system. The protein localises to the endosome membrane. It localises to the recycling endosome membrane. It is found in the cell membrane. Its subcellular location is the cytoplasmic vesicle membrane. Its function is as follows. Involved in endocytosis and intracellular vesicle trafficking, both during interphase and at the end of mitosis. Required for efficient progress through mitosis and cytokinesis. Required for normal formation of the cleavage furrow at the end of mitosis. Plays a role in endocytosis via clathrin-coated pits, but also clathrin-independent, actin-dependent fluid-phase endocytosis. Plays a role in macropinocytosis. Binds to membranes enriched in phosphatidylinositol 4,5-bisphosphate and promotes membrane tubulation. Stimulates the GTPase activity of DNM2. Promotes DNM2 location at the plasma membrane. Together with DNM2, involved in autophagosome assembly by regulating trafficking from recycling endosomes of phospholipid scramblase ATG9A. The chain is Sorting nexin-18 from Mus musculus (Mouse).